The chain runs to 383 residues: Photosynthetic reaction center cytochrome c subunit (383 aa).

The signal sequence occupies residues 1–22; the sequence is MNLGKQLTLPAVAVVASVVLLG. Cys23 carries the N-palmitoyl cysteine lipid modification. Residue Cys23 is the site of S-diacylglycerol cysteine attachment. Heme contacts are provided by Met94, Cys107, Cys110, His111, Met130, His144, Cys152, Cys155, His156, Met236, Cys247, Cys250, His251, Cys307, Cys310, and His311. The disordered stretch occupies residues 335-383; the sequence is PAEAAPATEEAPAAEAEAVEAAPVEEAAPAPVEQAAAPVEDAAPAPQQL.

In terms of assembly, component of the photosynthetic reaction center composed of protein subunits L (PufL), M (PufM), H (PuhA) and cytochrome C (PufC). The reaction center interacts with light-harvesting antenna complex LH1. In terms of processing, binds 4 heme groups per subunit.

The protein resides in the cellular chromatophore membrane. Functionally, the reaction center of purple bacteria contains a tightly bound cytochrome molecule which re-reduces the photo oxidized primary electron donor. The polypeptide is Photosynthetic reaction center cytochrome c subunit (pufC) (Allochromatium vinosum (strain ATCC 17899 / DSM 180 / NBRC 103801 / NCIMB 10441 / D) (Chromatium vinosum)).